Here is a 221-residue protein sequence, read N- to C-terminus: ATP synthase subunit a 1 (221 aa).

5 consecutive transmembrane segments (helical) span residues 20 to 40 (LTIV…ALIT), 78 to 98 (YLPF…CTVI), 108 to 128 (LSTT…FGIA), 174 to 194 (MILV…MNIL), and 196 to 216 (LLTG…YIAA).

This sequence belongs to the ATPase A chain family. In terms of assembly, F-type ATPases have 2 components, CF(1) - the catalytic core - and CF(0) - the membrane proton channel. CF(1) has five subunits: alpha(3), beta(3), gamma(1), delta(1), epsilon(1). CF(0) has four main subunits: a, b, b' and c.

Its subcellular location is the cell inner membrane. In terms of biological role, key component of the proton channel; it plays a direct role in the translocation of protons across the membrane. The chain is ATP synthase subunit a 1 from Chlorobaculum tepidum (strain ATCC 49652 / DSM 12025 / NBRC 103806 / TLS) (Chlorobium tepidum).